The following is a 312-amino-acid chain: Ribosomal RNA small subunit methyltransferase H (312 aa).

Residues 33–35 (GGY), Asp-51, Phe-78, Asp-97, and Gln-104 each bind S-adenosyl-L-methionine.

It belongs to the methyltransferase superfamily. RsmH family.

The protein localises to the cytoplasm. It carries out the reaction cytidine(1402) in 16S rRNA + S-adenosyl-L-methionine = N(4)-methylcytidine(1402) in 16S rRNA + S-adenosyl-L-homocysteine + H(+). Functionally, specifically methylates the N4 position of cytidine in position 1402 (C1402) of 16S rRNA. This chain is Ribosomal RNA small subunit methyltransferase H, found in Orientia tsutsugamushi (strain Ikeda) (Rickettsia tsutsugamushi).